The primary structure comprises 540 residues: Zona pellucida sperm-binding protein 4 (540 aa).

The first 24 residues, 1 to 24 (MAPGSTMWLLGYIFLCFPVSFALI), serve as a signal peptide directing secretion. The Extracellular portion of the chain corresponds to 25 to 515 (KQPKPETPTD…SGVPVHPGAL (491 aa)). N-linked (GlcNAc...) asparagine glycosylation is found at N76 and N97. Positions 145–187 (GLCDSVPVQDRLPCATAPISQEDCEELGCCHSSEEVNACYYGN) constitute a P-type domain. A ZP domain is found at 192–470 (HCTQEGHFSI…VTCPIDSRRR (279 aa)). N-linked (GlcNAc...) asparagine glycans are attached at residues N206 and N223. S296 carries an O-linked (GalNAc...) serine glycan. O-linked (GalNAc...) threonine glycosylation is present at T306. A disulfide bond links C371 and C446. Residues 467 to 540 (SRRRNSDINF…VSYVAIRTRR (74 aa)) constitute a propeptide, removed in mature form. 2 N-linked (GlcNAc...) asparagine glycosylation sites follow: N478 and N482. A helical membrane pass occupies residues 516 to 536 (WVAGLSGIFIIGALLVSYVAI). Over 537–540 (RTRR) the chain is Cytoplasmic.

It belongs to the ZP domain family. ZPB subfamily. Proteolytically cleaved before the transmembrane segment to yield the secreted ectodomain incorporated in the zona pellucida. Expressed in oocytes (at protein level).

The protein localises to the zona pellucida. It localises to the cell membrane. In terms of biological role, component of the zona pellucida, an extracellular matrix surrounding oocytes which mediates sperm binding, induction of the acrosome reaction and prevents post-fertilization polyspermy. The zona pellucida is composed of 3 to 4 glycoproteins, ZP1, ZP2, ZP3, and ZP4. ZP4 may act as a sperm receptor. This is Zona pellucida sperm-binding protein 4 (ZP4) from Oryctolagus cuniculus (Rabbit).